The following is a 700-amino-acid chain: Hedgehog-interacting protein (700 aa).

An N-terminal signal peptide occupies residues 1–17 (MLKMLSFKLLLLAVALG). Asn-99 carries N-linked (GlcNAc...) asparagine glycosylation. Intrachain disulfides connect Cys-216–Cys-536, Cys-218–Cys-543, Cys-402–Cys-624, Cys-435–Cys-452, Cys-500–Cys-594, Cys-608–Cys-617, Cys-612–Cys-623, Cys-625–Cys-634, Cys-639–Cys-649, Cys-643–Cys-655, and Cys-657–Cys-666. Residues 376–388 (LDDMEEMDGLSDF) are interaction with SHH zinc binding site. Asp-383 provides a ligand contact to Zn(2+). 3 N-linked (GlcNAc...) asparagine glycosylation sites follow: Asn-416, Asn-447, and Asn-459. 2 consecutive EGF-like domains span residues 607–634 (ECSRLCRNGYCTPTGKCCCSPGWEGDFC) and 635–667 (RTAKCEPACRHGGVCVRPNKCLCKKGYLGPQCE).

It belongs to the HHIP family. Interacts with all three hedgehog family members, SHH, IHH and DHH. As to expression, widely expressed in fetal and adult tissues. Highest expression in adult heart, liver and pancreas, and in fetal kidney.

It localises to the cell membrane. The protein resides in the secreted. It is found in the cytoplasm. Its function is as follows. Modulates hedgehog signaling in several cell types including brain and lung through direct interaction with members of the hedgehog family. In Homo sapiens (Human), this protein is Hedgehog-interacting protein (HHIP).